A 413-amino-acid polypeptide reads, in one-letter code: Ribulose bisphosphate carboxylase/oxygenase activase, chloroplastic (413 aa).

The transit peptide at 1–54 (MAATVSTIGAVNRTTLNNSNYGGLVPNSAFLGSRLKVSSRFTTSKMVTGNFKIV) directs the protein to the chloroplast. 162–169 (GGKGQGKS) serves as a coordination point for ATP.

The protein belongs to the RuBisCO activase family.

It localises to the plastid. Its subcellular location is the chloroplast stroma. In terms of biological role, activation of RuBisCO (ribulose-1,5-bisphosphate carboxylase/oxygenase; EC 4.1.1.39) involves the ATP-dependent carboxylation of the epsilon-amino group of lysine leading to a carbamate structure. This is Ribulose bisphosphate carboxylase/oxygenase activase, chloroplastic from Cucumis sativus (Cucumber).